The sequence spans 239 residues: Uridylate kinase (239 aa).

An ATP-binding site is contributed by 12–15; sequence KLSG. The tract at residues 20–25 is involved in allosteric activation by GTP; the sequence is GDQGAG. A UMP-binding site is contributed by G54. ATP-binding residues include G55 and R59. Residues D74 and 135–142 each bind UMP; that span reads TGNPFFTT. T162, Y168, and D171 together coordinate ATP.

This sequence belongs to the UMP kinase family. Homohexamer.

The protein resides in the cytoplasm. It catalyses the reaction UMP + ATP = UDP + ADP. The protein operates within pyrimidine metabolism; CTP biosynthesis via de novo pathway; UDP from UMP (UMPK route): step 1/1. Its activity is regulated as follows. Allosterically activated by GTP. Inhibited by UTP. Functionally, catalyzes the reversible phosphorylation of UMP to UDP. The polypeptide is Uridylate kinase (Methylococcus capsulatus (strain ATCC 33009 / NCIMB 11132 / Bath)).